The following is a 418-amino-acid chain: Tyrosine--tRNA ligase (418 aa).

Residue Tyr39 coordinates L-tyrosine. The 'HIGH' region motif lies at 44–53; it reads CTAASLHVGH. Positions 176 and 180 each coordinate L-tyrosine. Residues 236-240 carry the 'KMSKS' region motif; the sequence is KMGKT. Lys239 lines the ATP pocket. In terms of domain architecture, S4 RNA-binding spans 350–418; it reads IGVLVAFAEK…KKKHVLLRLA (69 aa).

Belongs to the class-I aminoacyl-tRNA synthetase family. TyrS type 1 subfamily. In terms of assembly, homodimer.

It localises to the cytoplasm. The enzyme catalyses tRNA(Tyr) + L-tyrosine + ATP = L-tyrosyl-tRNA(Tyr) + AMP + diphosphate + H(+). Catalyzes the attachment of tyrosine to tRNA(Tyr) in a two-step reaction: tyrosine is first activated by ATP to form Tyr-AMP and then transferred to the acceptor end of tRNA(Tyr). This is Tyrosine--tRNA ligase from Rhodopseudomonas palustris (strain ATCC BAA-98 / CGA009).